A 501-amino-acid polypeptide reads, in one-letter code: Protein anon-37Cs (501 aa).

The protein resides in the cytoplasm. Functionally, has a non-vital function. The sequence is that of Protein anon-37Cs (anon-37Cs) from Drosophila simulans (Fruit fly).